The following is a 319-amino-acid chain: Ribonuclease Z (319 aa).

Histidine 62, histidine 64, aspartate 66, histidine 67, histidine 139, aspartate 210, and histidine 268 together coordinate Zn(2+). Aspartate 66 (proton acceptor) is an active-site residue.

This sequence belongs to the RNase Z family. In terms of assembly, homodimer. Zn(2+) serves as cofactor.

It catalyses the reaction Endonucleolytic cleavage of RNA, removing extra 3' nucleotides from tRNA precursor, generating 3' termini of tRNAs. A 3'-hydroxy group is left at the tRNA terminus and a 5'-phosphoryl group is left at the trailer molecule.. Zinc phosphodiesterase, which displays some tRNA 3'-processing endonuclease activity. Probably involved in tRNA maturation, by removing a 3'-trailer from precursor tRNA. The polypeptide is Ribonuclease Z (Nostoc punctiforme (strain ATCC 29133 / PCC 73102)).